Reading from the N-terminus, the 191-residue chain is Ribosome maturation factor RimM (191 aa).

Residues 99-172 form the PRC barrel domain; it reads TDEFYQIDLI…FLVVDPVAAG (74 aa).

Belongs to the RimM family. In terms of assembly, binds ribosomal protein uS19.

The protein resides in the cytoplasm. In terms of biological role, an accessory protein needed during the final step in the assembly of 30S ribosomal subunit, possibly for assembly of the head region. Essential for efficient processing of 16S rRNA. May be needed both before and after RbfA during the maturation of 16S rRNA. It has affinity for free ribosomal 30S subunits but not for 70S ribosomes. The sequence is that of Ribosome maturation factor RimM from Bartonella bacilliformis (strain ATCC 35685 / KC583 / Herrer 020/F12,63).